A 287-amino-acid polypeptide reads, in one-letter code: Putative daunorubicin C-13 ketoreductase DnrU (287 aa).

An NADP(+)-binding site is contributed by 24-30 (GATSGIG). S149 serves as a coordination point for substrate. Y175 acts as the Proton acceptor in catalysis.

This sequence belongs to the short-chain dehydrogenases/reductases (SDR) family.

Functionally, could reduce the 13-carbonyl of daunorubicin to produce (13S)-13-dihydrodaunorubicin. Could also be able to reduce the 13-carbonyl of doxorubicin. This is Putative daunorubicin C-13 ketoreductase DnrU from Streptomyces sp. (strain C5).